The chain runs to 153 residues: Insulin-like growth factor 1 (153 aa).

Residues 49–77 (GPETLCGAELVDALQFVCGDRGFYFNKPT) form a b region. 3 disulfide bridges follow: Cys-54/Cys-96, Cys-66/Cys-109, and Cys-95/Cys-100. A c region spans residues 78–89 (GYGSSSRRAPQT). The a stretch occupies residues 90–110 (GIVDECCFRSCDLRRLEMYCA). Positions 111–118 (PLKPAKSA) are d. A propeptide spans 119 to 153 (RSVRAQRHTDMPKAQKEVHLKNASRGSAGNKNYRM) (e peptide). The interval 120–153 (SVRAQRHTDMPKAQKEVHLKNASRGSAGNKNYRM) is disordered. The span at 125 to 138 (RHTDMPKAQKEVHL) shows a compositional bias: basic and acidic residues. The span at 142–153 (SRGSAGNKNYRM) shows a compositional bias: polar residues.

Belongs to the insulin family. Forms a ternary complex with IGFR1 and ITGAV:ITGB3. Forms a ternary complex with IGFR1 and ITGA6:ITGB4. Forms a ternary complex with IGFBP3 and ALS.

It localises to the secreted. Functionally, the insulin-like growth factors, isolated from plasma, are structurally and functionally related to insulin but have a much higher growth-promoting activity. May be a physiological regulator of [1-14C]-2-deoxy-D-glucose (2DG) transport and glycogen synthesis in osteoblasts. Stimulates glucose transport in bone-derived osteoblastic (PyMS) cells and is effective at much lower concentrations than insulin, not only regarding glycogen and DNA synthesis but also with regard to enhancing glucose uptake. May play a role in synapse maturation. Ca(2+)-dependent exocytosis of IGF1 is required for sensory perception of smell in the olfactory bulb. Acts as a ligand for IGF1R. Binds to the alpha subunit of IGF1R, leading to the activation of the intrinsic tyrosine kinase activity which autophosphorylates tyrosine residues in the beta subunit thus initiating a cascade of down-stream signaling events leading to activation of the PI3K-AKT/PKB and the Ras-MAPK pathways. Binds to integrins ITGAV:ITGB3 and ITGA6:ITGB4. Its binding to integrins and subsequent ternary complex formation with integrins and IGFR1 are essential for IGF1 signaling. Induces the phosphorylation and activation of IGFR1, MAPK3/ERK1, MAPK1/ERK2 and AKT1. As part of the MAPK/ERK signaling pathway, acts as a negative regulator of apoptosis in cardiomyocytes via promotion of STUB1/CHIP-mediated ubiquitination and degradation of ICER-type isoforms of CREM. This Panthera tigris altaica (Siberian tiger) protein is Insulin-like growth factor 1.